The primary structure comprises 202 residues: Protein-methionine-sulfoxide reductase heme-binding subunit MsrQ (202 aa).

6 consecutive transmembrane segments (helical) span residues 8–28, 50–70, 76–96, 114–134, 148–168, and 174–194; these read YAWL…FLLW, LALI…WLGW, IRKA…GIYL, PFIT…LTSG, LLHR…WWGV, and GPLL…KTPA.

It belongs to the MsrQ family. In terms of assembly, heterodimer of a catalytic subunit (MsrP) and a heme-binding subunit (MsrQ). FMN serves as cofactor. Requires heme b as cofactor.

The protein resides in the cell membrane. Functionally, part of the MsrPQ system that repairs oxidized cell envelope proteins containing methionine sulfoxide residues (Met-O), using respiratory chain electrons. Thus protects these proteins from oxidative-stress damage caused by reactive species of oxygen and chlorine. MsrPQ is essential for the maintenance of envelope integrity under bleach stress, rescuing a wide series of structurally unrelated cell envelope proteins from methionine oxidation. MsrQ provides electrons for reduction to the reductase catalytic subunit MsrP, using the quinone pool of the respiratory chain. The chain is Protein-methionine-sulfoxide reductase heme-binding subunit MsrQ from Deinococcus radiodurans (strain ATCC 13939 / DSM 20539 / JCM 16871 / CCUG 27074 / LMG 4051 / NBRC 15346 / NCIMB 9279 / VKM B-1422 / R1).